The following is a 734-amino-acid chain: MNTSLRLNHYWITCADGLETLLQEEIEQLGTKVTERKAGRLIIEGTLEHAYRICMWSRLASRVLLPIHTYELERTHDARDVAEELYEGAISFDWSLIFAPQSTFAIRLHAEREIKVNTQFATLRVKDGVVDSFMEAVGRRPSIDTKQPEITLYVLAGKTEHTYCLDLSGDSLHKRGYRRFMTDAPIKENLAAAILQKAKLKERNPEIVLDPMCGSGTFIIEALMILTDRAPGLVRRFGFNGWHGHDRELWLSLKAEAAERHEKALEQPLPKFYAYDADWEAVKATRENIIAAGFEKLLGDIQIEERTLADWPDFGAENKTAFIVTNPPYGERLGDKASNRSLYLGLSALLQKNFPNQYAAIIAAQIEQADVLAFEAPETLRLMNGKLPIYVRFGTVKPEKVTQPFLANWQAQPVEMEEAQDFANRLQKNMTALKKWATKENIYCLRLYDADLPDFNLAVDLYGDRLHVQEYAPPKKIDPEKAKKRFNLALAAIRAVTGLNRDAIFIKTRARQTGTNQYTKQSTANKRFIVQEGKAKILVNLTDYLDTGLFLDHRQMRLRIAKEARGKHFLNLYSYTSTASLHAALGGAASTTSVDLSNTYLSWSKENFVLNGLTVDHADEQHMFFASDCFEWLKEGHEQYDLIFIDPPTFSNSKKFHGTFDVQRDHVSLIKRAMNRLTSEGTLYFSNNYRGFEMDEEIEALYEVEEITSETIGPDFKRNQKIHRAWKIQHPGLN.

Residues 49–167 enclose the THUMP domain; the sequence is HAYRICMWSR…KTEHTYCLDL (119 aa).

This sequence belongs to the methyltransferase superfamily. RlmKL family.

It is found in the cytoplasm. The catalysed reaction is guanosine(2445) in 23S rRNA + S-adenosyl-L-methionine = N(2)-methylguanosine(2445) in 23S rRNA + S-adenosyl-L-homocysteine + H(+). The enzyme catalyses guanosine(2069) in 23S rRNA + S-adenosyl-L-methionine = N(2)-methylguanosine(2069) in 23S rRNA + S-adenosyl-L-homocysteine + H(+). Functionally, specifically methylates the guanine in position 2445 (m2G2445) and the guanine in position 2069 (m7G2069) of 23S rRNA. The polypeptide is Ribosomal RNA large subunit methyltransferase K/L (Acinetobacter baumannii (strain ACICU)).